The primary structure comprises 301 residues: Oxygen-dependent coproporphyrinogen-III oxidase (301 aa).

Residue Ser94 participates in substrate binding. Residues His98 and His108 each contribute to the a divalent metal cation site. His108 (proton donor) is an active-site residue. Residue 110–112 (NVR) participates in substrate binding. Residues His147 and His177 each contribute to the a divalent metal cation site. The tract at residues 242–277 (YVEFNLVYDRGTLFGLQSGGRTESILMSMPPLARWE) is important for dimerization. A substrate-binding site is contributed by 260–262 (GGR).

This sequence belongs to the aerobic coproporphyrinogen-III oxidase family. Homodimer. Requires a divalent metal cation as cofactor.

It localises to the cytoplasm. The catalysed reaction is coproporphyrinogen III + O2 + 2 H(+) = protoporphyrinogen IX + 2 CO2 + 2 H2O. It participates in porphyrin-containing compound metabolism; protoporphyrin-IX biosynthesis; protoporphyrinogen-IX from coproporphyrinogen-III (O2 route): step 1/1. Involved in the heme biosynthesis. Catalyzes the aerobic oxidative decarboxylation of propionate groups of rings A and B of coproporphyrinogen-III to yield the vinyl groups in protoporphyrinogen-IX. In Photobacterium profundum (strain SS9), this protein is Oxygen-dependent coproporphyrinogen-III oxidase.